The sequence spans 2131 residues: Sodium channel protein para (2131 aa).

The Cytoplasmic segment spans residues 1 to 148 (MTEDSDSISE…FNPIRRVAIY (148 aa)). Basic and acidic residues predominate over residues 35–48 (HEKQKELERKRAEG). A disordered region spans residues 35–84 (HEKQKELERKRAEGEVPQYGRKKKQKEIRYDDEDEDEGPQPDPTLEQGVP). The span at 64–73 (YDDEDEDEGP) shows a compositional bias: acidic residues. One copy of the I repeat lies at 134 to 467 (WMLDPFNPIR…AAKAAKLEER (334 aa)). The helical transmembrane segment at 149 to 172 (ILVHPLFSLFIITTILVNCILMIM) threads the bilayer. Topologically, residues 173 to 180 (PTTPTVES) are extracellular. A helical transmembrane segment spans residues 181 to 199 (TEVIFTGIYTFESAVKVMA). Residues 200–212 (RGFILCPFTYLRD) lie on the Cytoplasmic side of the membrane. A helical membrane pass occupies residues 213 to 231 (AWNWLDFVVIALAYVTMGI). Topologically, residues 232-237 (DLGNLA) are extracellular. A helical; Voltage-sensor transmembrane segment spans residues 238–257 (ALRTFRVLRALKTVAIVPGL). The Cytoplasmic segment spans residues 258–273 (KTIVGAVIESVKNLRD). Residues 274–297 (VIILTMFSLSVFALMGLQIYMGVL) traverse the membrane as a helical segment. The Extracellular portion of the chain corresponds to 298–373 (TQKCIKKFPL…PNYGYTSFDS (76 aa)). An intrachain disulfide couples Cys301 to Cys350. N-linked (GlcNAc...) asparagine glycans are attached at residues Asn313, Asn325, and Asn343. The segment at residues 374 to 398 (FGWAFLSAFRLMTQDFWEDLYQLVL) is an intramembrane region (pore-forming). At 399-405 (RAAGPWH) the chain is on the extracellular side. The chain crosses the membrane as a helical span at residues 406 to 427 (MLFFIVIIFLGSFYLVNLILAI). At 428–812 (VAMSYDELQK…VWLKFQEWVS (385 aa)) the chain is on the cytoplasmic side. A phosphoserine; by PKA mark is found at Ser553 and Ser570. Disordered stretches follow at residues 553 to 572 (STTS…GSRS) and 671 to 691 (KESK…TNGG). A compositionally biased stretch (polar residues) spans 680–691 (TRNQSVGATNGG). The stretch at 799–1069 (DCCWVWLKFQ…IAEAFNRIGR (271 aa)) is one II repeat. A helical transmembrane segment spans residues 813 to 837 (LIVFDPFVELFITLCIVVNTMFMAM). The Extracellular portion of the chain corresponds to 838-848 (DHHDMNKEMER). A helical membrane pass occupies residues 849-873 (VLKSGNYFFTATFAIEATMKLMAMS). Topologically, residues 874–880 (PKYYFQE) are cytoplasmic. A helical transmembrane segment spans residues 881-900 (GWNIFDFIIVALSLLELGLE). The Extracellular segment spans residues 901–906 (GVQGLS). The chain crosses the membrane as a helical; Voltage-sensor span at residues 907–926 (VLRSFRLLRVFKLAKSWPTL). Over 927–941 (NLLISIMGRTMGALG) the chain is Cytoplasmic. Residues 942-963 (NLTFVLCIIIFIFAVMGMQLFG) traverse the membrane as a helical segment. At 964 to 985 (KNYHDHKDRFPDGDLPRWNFTD) the chain is on the extracellular side. An N-linked (GlcNAc...) asparagine glycan is attached at Asn982. The segment at residues 986-1006 (FMHSFMIVFRVLCGEWIESMW) is an intramembrane region (pore-forming). At 1007–1013 (DCMYVGD) the chain is on the extracellular side. Cysteines 1008 and 1016 form a disulfide. The chain crosses the membrane as a helical span at residues 1014-1041 (VSCIPFFLATVVIGNLVVLNLFLALLLS). The Cytoplasmic segment spans residues 1042–1296 (NFGSSSLSAP…WGNLRLKTFQ (255 aa)). The disordered stretch occupies residues 1166–1240 (DMKNNKPKKS…LDEEGECEEG (75 aa)). The span at 1177–1194 (YLNNATDDDTASINSYGS) shows a compositional bias: polar residues. A compositionally biased stretch (basic and acidic residues) spans 1199-1225 (PFKDESHKGSAETMEGEEKRDASKEDL). A compositionally biased stretch (acidic residues) spans 1226-1240 (GLDEELDEEGECEEG). An III repeat occupies 1284 to 1591 (WQGWGNLRLK…QKKYYNAMKK (308 aa)). The helical transmembrane segment at 1297–1320 (LIENKYFETAVITMILMSSLALAL) threads the bilayer. The Extracellular portion of the chain corresponds to 1321-1334 (EDVHLPQRPILQDI). The helical transmembrane segment at 1335–1359 (LYYMDRIFTVIFFLEMLIKWLALGF) threads the bilayer. The Cytoplasmic portion of the chain corresponds to 1360–1365 (KVYFTN). A helical membrane pass occupies residues 1366–1387 (AWCWLDFVIVMVSLINFVASLV). Over 1388-1391 (GAGG) the chain is Extracellular. A helical; Voltage-sensor membrane pass occupies residues 1392–1413 (IQAFKTMRTLRALRPLRAMSRM). The Cytoplasmic portion of the chain corresponds to 1414-1432 (QGMRVVVNALVQAIPSIFN). The chain crosses the membrane as a helical span at residues 1433-1454 (VLLVCLIFWLIFAIMGVQLFAG). Residues 1455-1495 (KYFKCEDMNGTKLSHEIIPNRNACESENYTWVNSAMNFDHV) lie on the Extracellular side of the membrane. 2 N-linked (GlcNAc...) asparagine glycosylation sites follow: Asn1463 and Asn1482. The pore-forming intramembrane region spans 1496–1517 (GNAYLCLFQVATFKGWIQIMND). Residues 1518-1533 (AIDSREVDKQPIRETN) are Extracellular-facing. The chain crosses the membrane as a helical span at residues 1534–1560 (IYMYLYFVFFIIFGSFFTLNLFIGVII). Topologically, residues 1561–1614 (DNFNEQKKKAGGSLEMFMTEDQKKYYNAMKKMGSKKPLKAIPRPRWRPQAIVFE) are cytoplasmic. An IV repeat occupies 1601-1862 (IPRPRWRPQA…NMYIAVILEN (262 aa)). Residues 1615–1638 (IVTDKKFDIIIMLFIGLNMFTMTL) form a helical membrane-spanning segment. Residues 1639 to 1649 (DRYDASDTYNA) lie on the Extracellular side of the membrane. A helical membrane pass occupies residues 1650–1673 (VLDYLNAIFVVIFSSECLLKIFAL). Topologically, residues 1674-1679 (RYHYFI) are cytoplasmic. Residues 1680-1703 (EPWNLFDVVVVILSILGLVLSDII) traverse the membrane as a helical segment. The Extracellular portion of the chain corresponds to 1704-1713 (EKYFVSPTLL). Residues 1714–1735 (RVVRVAKVGRVLRLVKGAKGIR) form a helical; Voltage-sensor membrane-spanning segment. Topologically, residues 1736–1750 (TLLFALAMSLPALFN) are cytoplasmic. Residues 1751-1773 (ICLLLFLVMFIFAIFGMSFFMHV) traverse the membrane as a helical segment. Residues 1774–1787 (KEKSGINDVYNFKT) are Extracellular-facing. Residues 1788 to 1810 (FGQSMILLFQMSTSAGWDGVLDA) constitute an intramembrane region (pore-forming). Residues 1811-1835 (IINEEACDPPDNDKGYPGNCGSATV) lie on the Extracellular side of the membrane. A helical transmembrane segment spans residues 1836–1860 (GITFLLSYLVISFLIVINMYIAVIL). Topologically, residues 1861–2131 (ENYSQATEDV…PSITSRTADV (271 aa)) are cytoplasmic. In terms of domain architecture, EF-hand spans 1877–1912 (DDYDMYYEIWQQFDPEGTQYIRYDQLSEFLDVLEPP). The tract at residues 2001–2096 (HKARGEGGGS…GSPGAGSAGR (96 aa)) is disordered. The span at 2021–2035 (GDPDAGDPAPDEATD) shows a compositional bias: acidic residues. The span at 2068–2088 (AAAAAAAAAAAAAAGTTTAGS) shows a compositional bias: low complexity.

This sequence belongs to the sodium channel (TC 1.A.1.10) family. Para subfamily.

The protein resides in the cell membrane. Mediates the voltage-dependent sodium ion permeability of excitable membranes. Assuming opened or closed conformations in response to the voltage difference across the membrane, the protein forms a sodium-selective channel through which Na(+) ions may pass in accordance with their electrochemical gradient. This chain is Sodium channel protein para (para), found in Drosophila melanogaster (Fruit fly).